We begin with the raw amino-acid sequence, 256 residues long: Enolase-phosphatase E1 (256 aa).

Positions 13 and 15 each coordinate Mg(2+). Substrate-binding positions include 127-128 (SS) and Lys-175. Residue Asp-202 participates in Mg(2+) binding.

Belongs to the HAD-like hydrolase superfamily. MasA/MtnC family. In terms of assembly, monomer. Mg(2+) is required as a cofactor.

It is found in the cytoplasm. It localises to the nucleus. The enzyme catalyses 5-methylsulfanyl-2,3-dioxopentyl phosphate + H2O = 1,2-dihydroxy-5-(methylsulfanyl)pent-1-en-3-one + phosphate. It functions in the pathway amino-acid biosynthesis; L-methionine biosynthesis via salvage pathway; L-methionine from S-methyl-5-thio-alpha-D-ribose 1-phosphate: step 3/6. Its pathway is amino-acid biosynthesis; L-methionine biosynthesis via salvage pathway; L-methionine from S-methyl-5-thio-alpha-D-ribose 1-phosphate: step 4/6. In terms of biological role, bifunctional enzyme that catalyzes the enolization of 2,3-diketo-5-methylthiopentyl-1-phosphate (DK-MTP-1-P) into the intermediate 2-hydroxy-3-keto-5-methylthiopentenyl-1-phosphate (HK-MTPenyl-1-P), which is then dephosphorylated to form the acireductone 1,2-dihydroxy-3-keto-5-methylthiopentene (DHK-MTPene). The protein is Enolase-phosphatase E1 (utr4) of Botryotinia fuckeliana (strain B05.10) (Noble rot fungus).